A 1034-amino-acid polypeptide reads, in one-letter code: Isoleucine--tRNA ligase (1034 aa).

The 'HIGH' region motif lies at proline 48 to histidine 58. A 'KMSKS' region motif is present at residues lysine 588–histidine 592. Position 591 (lysine 591) interacts with ATP.

It belongs to the class-I aminoacyl-tRNA synthetase family. IleS type 2 subfamily. In terms of assembly, monomer. Zn(2+) serves as cofactor.

It is found in the cytoplasm. It catalyses the reaction tRNA(Ile) + L-isoleucine + ATP = L-isoleucyl-tRNA(Ile) + AMP + diphosphate. Functionally, catalyzes the attachment of isoleucine to tRNA(Ile). As IleRS can inadvertently accommodate and process structurally similar amino acids such as valine, to avoid such errors it has two additional distinct tRNA(Ile)-dependent editing activities. One activity is designated as 'pretransfer' editing and involves the hydrolysis of activated Val-AMP. The other activity is designated 'posttransfer' editing and involves deacylation of mischarged Val-tRNA(Ile). This is Isoleucine--tRNA ligase from Clostridium kluyveri (strain ATCC 8527 / DSM 555 / NBRC 12016 / NCIMB 10680 / K1).